A 207-amino-acid chain; its full sequence is MQIGLDFNLVEDLVAGVDEVGRGPLCGAVVTAAVILDPARPILGLNDSKKLTEARREALFDEICEKALSFCIARAEVEEIDSLNILQATMLAMQRAVEGLHITPKLALIDGNRCPKLAVPAAPVVKGDSQVPAIAAASILAKVTRDREMSAFELIYPGYGIGGHKGYPTPVHLEALARLGPTPIHRRSFAPVRAAWEAREGVTDSLI.

Residues 12–201 form the RNase H type-2 domain; the sequence is DLVAGVDEVG…VRAAWEAREG (190 aa). Aspartate 18, glutamate 19, and aspartate 110 together coordinate a divalent metal cation.

It belongs to the RNase HII family. Mn(2+) is required as a cofactor. It depends on Mg(2+) as a cofactor.

It localises to the cytoplasm. It carries out the reaction Endonucleolytic cleavage to 5'-phosphomonoester.. In terms of biological role, endonuclease that specifically degrades the RNA of RNA-DNA hybrids. This chain is Ribonuclease HII, found in Pseudomonas putida (strain ATCC 47054 / DSM 6125 / CFBP 8728 / NCIMB 11950 / KT2440).